The following is a 511-amino-acid chain: Light-independent protochlorophyllide reductase subunit B (511 aa).

Residue Asp-36 participates in [4Fe-4S] cluster binding. Asp-299 serves as the catalytic Proton donor. 434–435 contributes to the substrate binding site; the sequence is GM.

Belongs to the ChlB/BchB/BchZ family. In terms of assembly, protochlorophyllide reductase is composed of three subunits; ChlL, ChlN and ChlB. Forms a heterotetramer of two ChlB and two ChlN subunits. [4Fe-4S] cluster is required as a cofactor.

The protein resides in the plastid. The protein localises to the chloroplast. The catalysed reaction is chlorophyllide a + oxidized 2[4Fe-4S]-[ferredoxin] + 2 ADP + 2 phosphate = protochlorophyllide a + reduced 2[4Fe-4S]-[ferredoxin] + 2 ATP + 2 H2O. Its pathway is porphyrin-containing compound metabolism; chlorophyll biosynthesis (light-independent). Its function is as follows. Component of the dark-operative protochlorophyllide reductase (DPOR) that uses Mg-ATP and reduced ferredoxin to reduce ring D of protochlorophyllide (Pchlide) to form chlorophyllide a (Chlide). This reaction is light-independent. The NB-protein (ChlN-ChlB) is the catalytic component of the complex. This is Light-independent protochlorophyllide reductase subunit B from Huperzia lucidula (Shining clubmoss).